Reading from the N-terminus, the 2183-residue chain is Genome polyprotein (2183 aa).

A lipid anchor (N-myristoyl glycine; by host) is attached at Gly2. Over 2–1493 the chain is Cytoplasmic; it reads GAQVSTQKTG…HVSRAFICLQ (1492 aa). Residues 566–582 form an amphipathic alpha-helix region; the sequence is FYQGPTEESVERAMGRV. Catalysis depends on for protease 2A activity residues His870 and Asp888. Zn(2+) contacts are provided by Cys905 and Cys907. Cys959 acts as the For protease 2A activity in catalysis. Residues Cys965 and His967 each coordinate Zn(2+). The interval 1099–1171 is membrane-binding; sequence NNNWLKKFTE…EQSAPSQSDQ (73 aa). The segment at 1099–1237 is oligomerization; it reads NNNWLKKFTE…SPGAGKSVAT (139 aa). Positions 1120 to 1124 are RNA-binding; it reads AVKIQ. The 157-residue stretch at 1203 to 1359 folds into the SF3 helicase domain; it reads EKKMSNYIQF…SMYSQNGKIN (157 aa). The Zn(2+) site is built by Cys1367, Cys1379, and Cys1384. Residues 1367–1384 form a C4-type; degenerate zinc finger; it reads CDEECCPVNFKKCCPLVC. The segment at 1411 to 1418 is RNA-binding; the sequence is EYNHRHSV. The oligomerization stretch occupies residues 1422–1427; the sequence is LEALFQ. The stretch at 1494–1509 is an intramembrane region; that stretch reads ALTTFVSVAGIIYIIY. The Cytoplasmic segment spans residues 1510–2183; that stretch reads KLFAGFQGAY…TLRRKWLDAF (674 aa). Tyr1519 bears the O-(5'-phospho-RNA)-tyrosine mark. Positions 1539 to 1717 constitute a Peptidase C3 domain; it reads GPAFEFAVAM…FSASLLRHYF (179 aa). Residues His1578, Glu1609, and Cys1685 each act as for protease 3C activity in the active site. Residues 1948-2064 form the RdRp catalytic domain; sequence GHLRAFDYSG…SYPLPIDASL (117 aa). Residues Asp1954 and Asp2050 each coordinate Mg(2+).

The protein belongs to the picornaviruses polyprotein family. As to quaternary structure, interacts with capsid protein VP1 and capsid protein VP3 to form heterotrimeric protomers. In terms of assembly, interacts with capsid protein VP0, and capsid protein VP3 to form heterotrimeric protomers. Five protomers subsequently associate to form pentamers which serve as building blocks for the capsid. Interacts with capsid protein VP2, capsid protein VP3 and capsid protein VP4 following cleavage of capsid protein VP0. Interacts with host CXADR. Interacts with capsid protein VP1 and capsid protein VP3 in the mature capsid. As to quaternary structure, interacts with capsid protein VP0 and capsid protein VP1 to form heterotrimeric protomers. Five protomers subsequently associate to form pentamers which serve as building blocks for the capsid. Interacts with capsid protein VP4 in the mature capsid. Interacts with protein 2C; this interaction may be important for virion morphogenesis. In terms of assembly, interacts with capsid protein VP1 and capsid protein VP3. Homodimer. As to quaternary structure, homohexamer; forms a hexameric ring structure with 6-fold symmetry characteristic of AAA+ ATPases. Interacts (via N-terminus) with host RTN3 (via reticulon domain); this interaction is important for viral replication. Interacts with capsid protein VP3; this interaction may be important for virion morphogenesis. In terms of assembly, interacts with protein 3CD. Homodimer. Interacts with host GBF1. Interacts (via GOLD domain) with host ACBD3 (via GOLD domain); this interaction allows the formation of a viral protein 3A/ACBD3 heterotetramer with a 2:2 stoichiometry, which will stimulate the recruitment of host PI4KB in order to synthesize PI4P at the viral RNA replication sites. As to quaternary structure, interacts with RNA-directed RNA polymerase. In terms of assembly, interacts with protein 3AB and with RNA-directed RNA polymerase. Interacts with Viral protein genome-linked and with protein 3CD. Mg(2+) is required as a cofactor. Post-translationally, specific enzymatic cleavages in vivo by the viral proteases yield processing intermediates and the mature proteins. In terms of processing, myristoylation is required for the formation of pentamers during virus assembly. Further assembly of 12 pentamers and a molecule of genomic RNA generates the provirion. During virion maturation, immature virions are rendered infectious following cleavage of VP0 into VP4 and VP2. This maturation seems to be an autocatalytic event triggered by the presence of RNA in the capsid and it is followed by a conformational change infectious virion. Post-translationally, myristoylation is required during RNA encapsidation and formation of the mature virus particle. In terms of processing, VPg is uridylylated by the polymerase into VPg-pUpU. This acts as a nucleotide-peptide primer for the genomic RNA replication.

It is found in the virion. The protein localises to the host cytoplasm. It localises to the host cytoplasmic vesicle membrane. Its subcellular location is the host nucleus. The catalysed reaction is a ribonucleoside 5'-triphosphate + H2O = a ribonucleoside 5'-diphosphate + phosphate + H(+). It carries out the reaction Selective cleavage of Tyr-|-Gly bond in the picornavirus polyprotein.. It catalyses the reaction RNA(n) + a ribonucleoside 5'-triphosphate = RNA(n+1) + diphosphate. The enzyme catalyses Selective cleavage of Gln-|-Gly bond in the poliovirus polyprotein. In other picornavirus reactions Glu may be substituted for Gln, and Ser or Thr for Gly.. Its activity is regulated as follows. Replication or transcription is subject to high level of random mutations by the nucleotide analog ribavirin. Its function is as follows. Forms an icosahedral capsid of pseudo T=3 symmetry with capsid proteins VP2 and VP3. The capsid is 300 Angstroms in diameter, composed of 60 copies of each capsid protein and enclosing the viral positive strand RNA genome. Capsid protein VP1 mainly forms the vertices of the capsid. Capsid protein VP1 interacts with host CXADR to provide virion attachment to target host cells. This attachment induces virion internalization. Tyrosine kinases are probably involved in the entry process. After binding to its receptor, the capsid undergoes conformational changes. Capsid protein VP1 N-terminus (that contains an amphipathic alpha-helix) and capsid protein VP4 are externalized. Together, they shape a pore in the host membrane through which viral genome is translocated to host cell cytoplasm. In terms of biological role, forms an icosahedral capsid of pseudo T=3 symmetry with capsid proteins VP2 and VP3. The capsid is 300 Angstroms in diameter, composed of 60 copies of each capsid protein and enclosing the viral positive strand RNA genome. Functionally, lies on the inner surface of the capsid shell. After binding to the host receptor, the capsid undergoes conformational changes. Capsid protein VP4 is released, Capsid protein VP1 N-terminus is externalized, and together, they shape a pore in the host membrane through which the viral genome is translocated into the host cell cytoplasm. Component of immature procapsids, which is cleaved into capsid proteins VP4 and VP2 after maturation. Allows the capsid to remain inactive before the maturation step. Its function is as follows. Cysteine protease that cleaves viral polyprotein and specific host proteins. It is responsible for the autocatalytic cleavage between the P1 and P2 regions, which is the first cleavage occurring in the polyprotein. Also cleaves the host translation initiation factor EIF4G1, in order to shut down the capped cellular mRNA translation. Inhibits the host nucleus-cytoplasm protein and RNA trafficking by cleaving host members of the nuclear pores. Counteracts stress granule formation probably by antagonizing its assembly or promoting its dissassembly. Cleaves and inhibits host IFIH1/MDA5, thereby inhibiting the type-I IFN production and the establishment of the antiviral state. Cleaves and inhibits host MAVS, thereby inhibiting the type-I IFN production and the establishment of the antiviral state. In terms of biological role, plays an essential role in the virus replication cycle by acting as a viroporin. Creates a pore in the host endoplasmic reticulum and as a consequence releases Ca2+ in the cytoplasm of infected cell. In turn, high levels of cytoplasmic calcium may trigger membrane trafficking and transport of viral ER-associated proteins to viroplasms, sites of viral genome replication. Functionally, induces and associates with structural rearrangements of intracellular membranes. Displays RNA-binding, nucleotide binding and NTPase activities. May play a role in virion morphogenesis and viral RNA encapsidation by interacting with the capsid protein VP3. Localizes the viral replication complex to the surface of membranous vesicles. Together with protein 3CD binds the Cis-Active RNA Element (CRE) which is involved in RNA synthesis initiation. Acts as a cofactor to stimulate the activity of 3D polymerase, maybe through a nucleid acid chaperone activity. Its function is as follows. Localizes the viral replication complex to the surface of membranous vesicles. It inhibits host cell endoplasmic reticulum-to-Golgi apparatus transport and causes the disassembly of the Golgi complex, possibly through GBF1 interaction. This would result in depletion of MHC, trail receptors and IFN receptors at the host cell surface. Plays an essential role in viral RNA replication by recruiting ACBD3 and PI4KB at the viral replication sites, thereby allowing the formation of the rearranged membranous structures where viral replication takes place. In terms of biological role, acts as a primer for viral RNA replication and remains covalently bound to viral genomic RNA. VPg is uridylylated prior to priming replication into VPg-pUpU. The oriI viral genomic sequence may act as a template for this. The VPg-pUpU is then used as primer on the genomic RNA poly(A) by the RNA-dependent RNA polymerase to replicate the viral genome. During genome replication, the VPg-RNA linkage is removed by the host TDP2, thereby accelerating replication. During the late stage of the replication cycle, host TDP2 is excluded from sites of viral RNA synthesis and encapsidation, allowing for the generation of progeny virions. Functionally, involved in the viral replication complex and viral polypeptide maturation. It exhibits protease activity with a specificity and catalytic efficiency that is different from protease 3C. Protein 3CD lacks polymerase activity. Protein 3CD binds to the 5'UTR of the viral genome. Replicates the viral genomic RNA on the surface of intracellular membranes. May form linear arrays of subunits that propagate along a strong head-to-tail interaction called interface-I. Covalently attaches UMP to a tyrosine of VPg, which is used to prime RNA synthesis. The positive stranded RNA genome is first replicated at virus induced membranous vesicles, creating a dsRNA genomic replication form. This dsRNA is then used as template to synthesize positive stranded RNA genomes. ss(+)RNA genomes are either translated, replicated or encapsidated. Its function is as follows. Major viral protease that mediates proteolytic processing of the polyprotein. Cleaves host EIF5B, contributing to host translation shutoff. Also cleaves host PABPC1, contributing to host translation shutoff. Cleaves host NLRP1, triggers host N-glycine-mediated degradation of the autoinhibitory NLRP1 N-terminal fragment. In Coxsackievirus B4 (strain E2), this protein is Genome polyprotein.